Consider the following 1401-residue polypeptide: DNA polymerase III PolC-type (1401 aa).

The Exonuclease domain maps to Phe388–Phe543.

Belongs to the DNA polymerase type-C family. PolC subfamily.

The protein localises to the cytoplasm. The enzyme catalyses DNA(n) + a 2'-deoxyribonucleoside 5'-triphosphate = DNA(n+1) + diphosphate. In terms of biological role, required for replicative DNA synthesis. This DNA polymerase also exhibits 3' to 5' exonuclease activity. The protein is DNA polymerase III PolC-type of Caldanaerobacter subterraneus subsp. tengcongensis (strain DSM 15242 / JCM 11007 / NBRC 100824 / MB4) (Thermoanaerobacter tengcongensis).